Here is a 239-residue protein sequence, read N- to C-terminus: 4-hydroxy-tetrahydrodipicolinate reductase (239 aa).

Residues 9-14, 78-80, and 104-107 each bind NAD(+); these read GINGKM, GTT, and APNF. The active-site Proton donor/acceptor is the H134. Residue H135 participates in (S)-2,3,4,5-tetrahydrodipicolinate binding. The Proton donor role is filled by K138. 144–145 contributes to the (S)-2,3,4,5-tetrahydrodipicolinate binding site; that stretch reads GT.

Belongs to the DapB family.

The protein resides in the cytoplasm. It catalyses the reaction (S)-2,3,4,5-tetrahydrodipicolinate + NAD(+) + H2O = (2S,4S)-4-hydroxy-2,3,4,5-tetrahydrodipicolinate + NADH + H(+). The catalysed reaction is (S)-2,3,4,5-tetrahydrodipicolinate + NADP(+) + H2O = (2S,4S)-4-hydroxy-2,3,4,5-tetrahydrodipicolinate + NADPH + H(+). It participates in amino-acid biosynthesis; L-lysine biosynthesis via DAP pathway; (S)-tetrahydrodipicolinate from L-aspartate: step 4/4. In terms of biological role, catalyzes the conversion of 4-hydroxy-tetrahydrodipicolinate (HTPA) to tetrahydrodipicolinate. This is 4-hydroxy-tetrahydrodipicolinate reductase from Coxiella burnetii (strain Dugway 5J108-111).